A 142-amino-acid polypeptide reads, in one-letter code: Large ribosomal subunit protein uL11 (142 aa).

This sequence belongs to the universal ribosomal protein uL11 family. Part of the ribosomal stalk of the 50S ribosomal subunit. Interacts with L10 and the large rRNA to form the base of the stalk. L10 forms an elongated spine to which L12 dimers bind in a sequential fashion forming a multimeric L10(L12)X complex. Post-translationally, one or more lysine residues are methylated.

Forms part of the ribosomal stalk which helps the ribosome interact with GTP-bound translation factors. The sequence is that of Large ribosomal subunit protein uL11 from Mycobacterium tuberculosis (strain ATCC 25177 / H37Ra).